Consider the following 337-residue polypeptide: Holliday junction branch migration complex subunit RuvB (337 aa).

The interval 1–180 is large ATPase domain (RuvB-L); that stretch reads MTRLISADKS…FGVISRLEFY (180 aa). Residues Leu19, Arg20, Gly61, Lys64, Thr65, Thr66, 127–129, Arg170, Tyr180, and Arg217 contribute to the ATP site; that span reads EDF. Thr65 contacts Mg(2+). Residues 181 to 251 are small ATPAse domain (RuvB-S); sequence THDELAFIIT…VADQALALLE (71 aa). A head domain (RuvB-H) region spans residues 254–337; sequence EMGFDMMDRA…APEPPQGKLF (84 aa). DNA is bound by residues Arg309 and Arg314.

This sequence belongs to the RuvB family. In terms of assembly, homohexamer. Forms an RuvA(8)-RuvB(12)-Holliday junction (HJ) complex. HJ DNA is sandwiched between 2 RuvA tetramers; dsDNA enters through RuvA and exits via RuvB. An RuvB hexamer assembles on each DNA strand where it exits the tetramer. Each RuvB hexamer is contacted by two RuvA subunits (via domain III) on 2 adjacent RuvB subunits; this complex drives branch migration. In the full resolvosome a probable DNA-RuvA(4)-RuvB(12)-RuvC(2) complex forms which resolves the HJ.

The protein resides in the cytoplasm. The catalysed reaction is ATP + H2O = ADP + phosphate + H(+). In terms of biological role, the RuvA-RuvB-RuvC complex processes Holliday junction (HJ) DNA during genetic recombination and DNA repair, while the RuvA-RuvB complex plays an important role in the rescue of blocked DNA replication forks via replication fork reversal (RFR). RuvA specifically binds to HJ cruciform DNA, conferring on it an open structure. The RuvB hexamer acts as an ATP-dependent pump, pulling dsDNA into and through the RuvAB complex. RuvB forms 2 homohexamers on either side of HJ DNA bound by 1 or 2 RuvA tetramers; 4 subunits per hexamer contact DNA at a time. Coordinated motions by a converter formed by DNA-disengaged RuvB subunits stimulates ATP hydrolysis and nucleotide exchange. Immobilization of the converter enables RuvB to convert the ATP-contained energy into a lever motion, pulling 2 nucleotides of DNA out of the RuvA tetramer per ATP hydrolyzed, thus driving DNA branch migration. The RuvB motors rotate together with the DNA substrate, which together with the progressing nucleotide cycle form the mechanistic basis for DNA recombination by continuous HJ branch migration. Branch migration allows RuvC to scan DNA until it finds its consensus sequence, where it cleaves and resolves cruciform DNA. The chain is Holliday junction branch migration complex subunit RuvB from Geobacter sp. (strain M21).